Here is a 203-residue protein sequence, read N- to C-terminus: Small ribosomal subunit protein uS4 (203 aa).

Residues 22 to 45 (TGKELARRPYKPGQHGPNSRGKVS) are disordered. An S4 RNA-binding domain is found at 93–156 (QRLDNVVYRL…QNISTIKEAV (64 aa)).

This sequence belongs to the universal ribosomal protein uS4 family. In terms of assembly, part of the 30S ribosomal subunit. Contacts protein S5. The interaction surface between S4 and S5 is involved in control of translational fidelity.

One of the primary rRNA binding proteins, it binds directly to 16S rRNA where it nucleates assembly of the body of the 30S subunit. In terms of biological role, with S5 and S12 plays an important role in translational accuracy. The polypeptide is Small ribosomal subunit protein uS4 (Enterococcus faecalis (strain ATCC 700802 / V583)).